We begin with the raw amino-acid sequence, 72 residues long: Translation initiation factor IF-1 (72 aa).

The 72-residue stretch at 1–72 (MAKEEVLEFP…TKGRITYRFK (72 aa)) folds into the S1-like domain.

This sequence belongs to the IF-1 family. As to quaternary structure, component of the 30S ribosomal translation pre-initiation complex which assembles on the 30S ribosome in the order IF-2 and IF-3, IF-1 and N-formylmethionyl-tRNA(fMet); mRNA recruitment can occur at any time during PIC assembly.

It localises to the cytoplasm. In terms of biological role, one of the essential components for the initiation of protein synthesis. Stabilizes the binding of IF-2 and IF-3 on the 30S subunit to which N-formylmethionyl-tRNA(fMet) subsequently binds. Helps modulate mRNA selection, yielding the 30S pre-initiation complex (PIC). Upon addition of the 50S ribosomal subunit IF-1, IF-2 and IF-3 are released leaving the mature 70S translation initiation complex. This is Translation initiation factor IF-1 from Sinorhizobium medicae (strain WSM419) (Ensifer medicae).